A 492-amino-acid chain; its full sequence is G protein-activated inward rectifier potassium channel 1 (492 aa).

Residues 1–72 (MSALRRKLGD…LFTTLVDLKW (72 aa)) are Cytoplasmic-facing. Residues 16–35 (STSASGGGLPPPRAAPRGKR) are disordered. Residues 73–97 (RWNLFIFVLTYTVAWLFMASMWWVI) traverse the membrane as a helical segment. Over 98–121 (AYMRGDLNKAHDDSYTPCVANVYN) the chain is Extracellular. Positions 122–133 (FPSAFLFFIETE) form an intramembrane region, helical; Pore-forming. The pore-forming intramembrane region spans 134 to 140 (ATIGYGY). The Selectivity filter motif lies at 135-140 (TIGYGY). Over 141–149 (RYITDKCPE) the chain is Extracellular. A helical membrane pass occupies residues 150–171 (GIILFLFQSILGSIVDAFLIGC). Residues 172–492 (MFIKMSQPKK…LRKMNSDRFT (321 aa)) are Cytoplasmic-facing. The polyphosphoinositide (PIP2)-binding stretch occupies residues 174-201 (IKMSQPKKRAETLMFSEHAAISMRDGKL). The segment at 452-492 (SDPMSQSVADLPPKLQKLSGGGRMEGNLPPKLRKMNSDRFT) is disordered.

This sequence belongs to the inward rectifier-type potassium channel (TC 1.A.2.1) family. KCNJ3 subfamily. In terms of assembly, associates with KCNJ5/GIRK4 or KCNJ6/GIRK2 or KCNJ9/GIRK3 to form a G-protein activated heteromultimer pore-forming unit. The resulting inward current is much larger.

The protein resides in the membrane. The enzyme catalyses K(+)(in) = K(+)(out). Heteromultimer composed of KCNJ3/GIRK1 and KCNJ5/GIRK4 is activated by phosphatidylinositol 4,5 biphosphate (PtdIns(4,5)P2). Functionally, inward rectifier potassium channels are characterized by a greater tendency to allow potassium to flow into the cell rather than out of it. Their voltage dependence is regulated by the concentration of extracellular potassium; as external potassium is raised, the voltage range of the channel opening shifts to more positive voltages. The inward rectification is mainly due to the blockage of outward current by internal magnesium. This potassium channel is controlled by G proteins. This receptor plays a crucial role in regulating the heartbeat. The sequence is that of G protein-activated inward rectifier potassium channel 1 (KCNJ3) from Gallus gallus (Chicken).